Here is a 245-residue protein sequence, read N- to C-terminus: MPRYKLTIEYDGTPFCGWQLQETLPSVQGALEAAVQATCGVPTRVHGSGRTDAGVHATGQVAHCDIAKDFRPDKLRDALNAHLRPNPVAVLEAEIVSDTFEARFSARKRHYRYRIVNRRSNLALEVGRVWRVPQRLDSDAMHAAAQRLIGRHDFTTFRDTECQAKSPEKTLDQLDVVRDGDAVTILTSARSYLHSQVRSMVGSLVWVGQGRWSADDLAAALAARNRAACGVVAPPEGLYLVKVDY.

Catalysis depends on D52, which acts as the Nucleophile. Residue Y111 participates in substrate binding.

It belongs to the tRNA pseudouridine synthase TruA family. As to quaternary structure, homodimer.

The enzyme catalyses uridine(38/39/40) in tRNA = pseudouridine(38/39/40) in tRNA. In terms of biological role, formation of pseudouridine at positions 38, 39 and 40 in the anticodon stem and loop of transfer RNAs. The sequence is that of tRNA pseudouridine synthase A from Bradyrhizobium sp. (strain BTAi1 / ATCC BAA-1182).